Consider the following 111-residue polypeptide: Putative pterin-4-alpha-carbinolamine dehydratase (111 aa).

Belongs to the pterin-4-alpha-carbinolamine dehydratase family.

The enzyme catalyses (4aS,6R)-4a-hydroxy-L-erythro-5,6,7,8-tetrahydrobiopterin = (6R)-L-erythro-6,7-dihydrobiopterin + H2O. The sequence is that of Putative pterin-4-alpha-carbinolamine dehydratase from Alkaliphilus metalliredigens (strain QYMF).